Consider the following 734-residue polypeptide: Ribosomal RNA large subunit methyltransferase K/L (734 aa).

Positions 49-167 constitute a THUMP domain; sequence HAYRICMWSR…KTEHTYCLDL (119 aa).

It belongs to the methyltransferase superfamily. RlmKL family.

Its subcellular location is the cytoplasm. The catalysed reaction is guanosine(2445) in 23S rRNA + S-adenosyl-L-methionine = N(2)-methylguanosine(2445) in 23S rRNA + S-adenosyl-L-homocysteine + H(+). It catalyses the reaction guanosine(2069) in 23S rRNA + S-adenosyl-L-methionine = N(2)-methylguanosine(2069) in 23S rRNA + S-adenosyl-L-homocysteine + H(+). Functionally, specifically methylates the guanine in position 2445 (m2G2445) and the guanine in position 2069 (m7G2069) of 23S rRNA. In Acinetobacter baumannii (strain ACICU), this protein is Ribosomal RNA large subunit methyltransferase K/L.